The chain runs to 56 residues: Large ribosomal subunit protein bL32 (56 aa).

The segment at 1 to 21 (MGVPQRRQSHARKNKRRSEWR) is disordered. The span at 7-19 (RQSHARKNKRRSE) shows a compositional bias: basic residues.

The protein belongs to the bacterial ribosomal protein bL32 family.

The chain is Large ribosomal subunit protein bL32 from Syntrophomonas wolfei subsp. wolfei (strain DSM 2245B / Goettingen).